Reading from the N-terminus, the 153-residue chain is Aspartate carbamoyltransferase regulatory chain (153 aa).

4 residues coordinate Zn(2+): C109, C114, C138, and C141.

This sequence belongs to the PyrI family. As to quaternary structure, contains catalytic and regulatory chains. Zn(2+) serves as cofactor.

In terms of biological role, involved in allosteric regulation of aspartate carbamoyltransferase. This is Aspartate carbamoyltransferase regulatory chain from Enterobacter sp. (strain 638).